The chain runs to 388 residues: Formate-dependent phosphoribosylglycinamide formyltransferase (388 aa).

N(1)-(5-phospho-beta-D-ribosyl)glycinamide-binding positions include 20–21 (EL) and E80. Residues R112, K153, 158-163 (SSGKGQ), 193-196 (EEFI), and E201 each bind ATP. In terms of domain architecture, ATP-grasp spans 117 to 306 (RLAFEKLGLR…EFEIHARAIL (190 aa)). Mg(2+)-binding residues include E265 and E277. Residues D284, K352, and 359 to 360 (RR) contribute to the N(1)-(5-phospho-beta-D-ribosyl)glycinamide site.

It belongs to the PurK/PurT family. In terms of assembly, homodimer.

The catalysed reaction is N(1)-(5-phospho-beta-D-ribosyl)glycinamide + formate + ATP = N(2)-formyl-N(1)-(5-phospho-beta-D-ribosyl)glycinamide + ADP + phosphate + H(+). It participates in purine metabolism; IMP biosynthesis via de novo pathway; N(2)-formyl-N(1)-(5-phospho-D-ribosyl)glycinamide from N(1)-(5-phospho-D-ribosyl)glycinamide (formate route): step 1/1. Functionally, involved in the de novo purine biosynthesis. Catalyzes the transfer of formate to 5-phospho-ribosyl-glycinamide (GAR), producing 5-phospho-ribosyl-N-formylglycinamide (FGAR). Formate is provided by PurU via hydrolysis of 10-formyl-tetrahydrofolate. This is Formate-dependent phosphoribosylglycinamide formyltransferase from Methanococcus maripaludis (strain DSM 14266 / JCM 13030 / NBRC 101832 / S2 / LL).